The following is a 292-amino-acid chain: 2-methylisocitrate lyase (292 aa).

Residue 44–46 (SGA) participates in substrate binding. Positions 84 and 86 each coordinate Mg(2+). Residues 121–122 (CG), arginine 156, glutamate 186, 208–210 (NMT), arginine 239, and arginine 268 each bind substrate.

Belongs to the isocitrate lyase/PEP mutase superfamily. Methylisocitrate lyase family. As to quaternary structure, homotetramer; dimer of dimers. Mg(2+) serves as cofactor.

The catalysed reaction is (2S,3R)-3-hydroxybutane-1,2,3-tricarboxylate = pyruvate + succinate. It functions in the pathway organic acid metabolism; propanoate degradation. Its function is as follows. Involved in the catabolism of short chain fatty acids (SCFA) via the 2-methylcitrate cycle I (propionate degradation route). Catalyzes the thermodynamically favored C-C bond cleavage of (2R,3S)-2-methylisocitrate to yield pyruvate and succinate via an alpha-carboxy-carbanion intermediate. This chain is 2-methylisocitrate lyase, found in Shewanella oneidensis (strain ATCC 700550 / JCM 31522 / CIP 106686 / LMG 19005 / NCIMB 14063 / MR-1).